Reading from the N-terminus, the 252-residue chain is Small ribosomal subunit protein uS2B (252 aa).

At S2 the chain carries N-acetylserine. 2 stretches are compositionally biased toward acidic residues: residues V213–K229 and E241–W252. The tract at residues V213 to W252 is disordered.

The protein belongs to the universal ribosomal protein uS2 family. As to quaternary structure, component of the small ribosomal subunit. Mature ribosomes consist of a small (40S) and a large (60S) subunit. The 40S subunit contains about 33 different proteins and 1 molecule of RNA (18S). The 60S subunit contains about 49 different proteins and 3 molecules of RNA (25S, 5.8S and 5S). Interacts with RPS21.

Its subcellular location is the cytoplasm. Functionally, required for the assembly and/or stability of the 40S ribosomal subunit. Required for the processing of the 20S rRNA-precursor to mature 18S rRNA in a late step of the maturation of 40S ribosomal subunits. The sequence is that of Small ribosomal subunit protein uS2B from Saccharomyces cerevisiae (strain RM11-1a) (Baker's yeast).